A 333-amino-acid polypeptide reads, in one-letter code: Ribosomal RNA small subunit methyltransferase C (333 aa).

The protein belongs to the methyltransferase superfamily. RsmC family. In terms of assembly, monomer.

Its subcellular location is the cytoplasm. The enzyme catalyses guanosine(1207) in 16S rRNA + S-adenosyl-L-methionine = N(2)-methylguanosine(1207) in 16S rRNA + S-adenosyl-L-homocysteine + H(+). Specifically methylates the guanine in position 1207 of 16S rRNA in the 30S particle. In Actinobacillus succinogenes (strain ATCC 55618 / DSM 22257 / CCUG 43843 / 130Z), this protein is Ribosomal RNA small subunit methyltransferase C.